Consider the following 250-residue polypeptide: Ubiquinone/menaquinone biosynthesis C-methyltransferase UbiE (250 aa).

S-adenosyl-L-methionine-binding positions include threonine 73, aspartate 94, 122–123 (NA), and serine 139.

It belongs to the class I-like SAM-binding methyltransferase superfamily. MenG/UbiE family.

The catalysed reaction is a 2-demethylmenaquinol + S-adenosyl-L-methionine = a menaquinol + S-adenosyl-L-homocysteine + H(+). The enzyme catalyses a 2-methoxy-6-(all-trans-polyprenyl)benzene-1,4-diol + S-adenosyl-L-methionine = a 5-methoxy-2-methyl-3-(all-trans-polyprenyl)benzene-1,4-diol + S-adenosyl-L-homocysteine + H(+). Its pathway is quinol/quinone metabolism; menaquinone biosynthesis; menaquinol from 1,4-dihydroxy-2-naphthoate: step 2/2. The protein operates within cofactor biosynthesis; ubiquinone biosynthesis. Its function is as follows. Methyltransferase required for the conversion of demethylmenaquinol (DMKH2) to menaquinol (MKH2) and the conversion of 2-polyprenyl-6-methoxy-1,4-benzoquinol (DDMQH2) to 2-polyprenyl-3-methyl-6-methoxy-1,4-benzoquinol (DMQH2). The chain is Ubiquinone/menaquinone biosynthesis C-methyltransferase UbiE from Francisella tularensis subsp. novicida (strain U112).